We begin with the raw amino-acid sequence, 89 residues long: Putative regulatory protein RBAM_015500 (89 aa).

Belongs to the RemA family.

This chain is Putative regulatory protein RBAM_015500, found in Bacillus velezensis (strain DSM 23117 / BGSC 10A6 / LMG 26770 / FZB42) (Bacillus amyloliquefaciens subsp. plantarum).